The primary structure comprises 357 residues: Homoarginine-6-hydroxylase 2-ODD-C23.2 (357 aa).

In terms of domain architecture, Fe2OG dioxygenase spans 208-308 (PFWVMRIIGY…RVCVAFFYET (101 aa)). The Fe cation site is built by His231, Asp233, and His289. Arg299 is a binding site for 2-oxoglutarate.

Belongs to the iron/ascorbate-dependent oxidoreductase family. It depends on Fe(2+) as a cofactor. As to expression, expressed in senescent leaves.

The protein localises to the cytoplasm. The protein resides in the cytosol. It carries out the reaction L-homoarginine + 2-oxoglutarate + O2 = 6-hydroxy-L-homoarginine + succinate + CO2. The enzyme catalyses L-arginine + 2-oxoglutarate + O2 = 5-hydroxy-L-arginine + succinate + CO2. Slightly inhibited by canavanine (Can), the 5-oxa-analog of arginine. Functionally, 2-oxoglutarate-dependent dioxygenase catalyzing homoarginine 6-hydroxylation and arginine-5-hydroxylation thus producing 6-hydroxy-L-homoarginine and 5-hydroxy-L-arginine, respectively. Guanidine (Gd) is in turn synthesized by the spontaneous conversion of 6-hydroxy-L-homoarginine and 5-hydroxy-L-arginine to (S)-2-amino-6-oxohexanoate (RHEA:79843) and L-glutamate 5-semialdehyde (RHEA:31527); guanidine is a nitrogen-rich compound that may serve as a defense or signaling substance. In Arabidopsis thaliana (Mouse-ear cress), this protein is Homoarginine-6-hydroxylase 2-ODD-C23.2.